A 288-amino-acid polypeptide reads, in one-letter code: 2-hydroxy-6-oxononadienedioate/2-hydroxy-6-oxononatrienedioate hydrolase (288 aa).

Catalysis depends on His-267, which acts as the Proton acceptor.

It belongs to the AB hydrolase superfamily. MhpC family. Homodimer.

The catalysed reaction is (2Z,4E)-2-hydroxy-6-oxonona-2,4-dienedioate + H2O = (2Z)-2-hydroxypenta-2,4-dienoate + succinate + H(+). It catalyses the reaction (2Z,4E,7E)-2-hydroxy-6-oxonona-2,4,7-trienedioate + H2O = (2Z)-2-hydroxypenta-2,4-dienoate + fumarate + H(+). It functions in the pathway aromatic compound metabolism; 3-phenylpropanoate degradation. Functionally, catalyzes the cleavage of the C5-C6 bond of 2-hydroxy-6-oxononadienedioate and 2-hydroxy-6-oxononatrienedioate, a dienol ring fission product of the bacterial meta-cleavage pathway for degradation of phenylpropionic acid. The chain is 2-hydroxy-6-oxononadienedioate/2-hydroxy-6-oxononatrienedioate hydrolase from Klebsiella pneumoniae subsp. pneumoniae (strain ATCC 700721 / MGH 78578).